Reading from the N-terminus, the 156-residue chain is Small ribosomal subunit protein uS7 (156 aa).

It belongs to the universal ribosomal protein uS7 family. Part of the 30S ribosomal subunit. Contacts proteins S9 and S11.

Its function is as follows. One of the primary rRNA binding proteins, it binds directly to 16S rRNA where it nucleates assembly of the head domain of the 30S subunit. Is located at the subunit interface close to the decoding center, probably blocks exit of the E-site tRNA. This is Small ribosomal subunit protein uS7 from Ruegeria pomeroyi (strain ATCC 700808 / DSM 15171 / DSS-3) (Silicibacter pomeroyi).